The sequence spans 103 residues: Co-chaperonin GroES (103 aa).

It belongs to the GroES chaperonin family. As to quaternary structure, heptamer of 7 subunits arranged in a ring. Interacts with the chaperonin GroEL.

The protein localises to the cytoplasm. In terms of biological role, together with the chaperonin GroEL, plays an essential role in assisting protein folding. The GroEL-GroES system forms a nano-cage that allows encapsulation of the non-native substrate proteins and provides a physical environment optimized to promote and accelerate protein folding. GroES binds to the apical surface of the GroEL ring, thereby capping the opening of the GroEL channel. This Synechococcus sp. (strain CC9902) protein is Co-chaperonin GroES.